A 156-amino-acid polypeptide reads, in one-letter code: Cyanate hydratase (156 aa).

Active-site residues include R96, E99, and S122.

It belongs to the cyanase family.

The catalysed reaction is cyanate + hydrogencarbonate + 3 H(+) = NH4(+) + 2 CO2. Catalyzes the reaction of cyanate with bicarbonate to produce ammonia and carbon dioxide. This chain is Cyanate hydratase, found in Pseudomonas entomophila (strain L48).